The following is a 268-amino-acid chain: NAD kinase (268 aa).

Residue Asp45 is the Proton acceptor of the active site. Residues 45 to 46 (DG), 122 to 123 (NE), Arg148, Asp150, 161 to 166 (TAYGKS), Ala185, and Gln223 each bind NAD(+).

This sequence belongs to the NAD kinase family. The cofactor is a divalent metal cation.

The protein resides in the cytoplasm. It catalyses the reaction NAD(+) + ATP = ADP + NADP(+) + H(+). Its function is as follows. Involved in the regulation of the intracellular balance of NAD and NADP, and is a key enzyme in the biosynthesis of NADP. Catalyzes specifically the phosphorylation on 2'-hydroxyl of the adenosine moiety of NAD to yield NADP. The polypeptide is NAD kinase (Latilactobacillus sakei subsp. sakei (strain 23K) (Lactobacillus sakei subsp. sakei)).